The sequence spans 280 residues: Tryptophan 2,3-dioxygenase (280 aa).

Substrate contacts are provided by residues 49-53, Tyr-111, and Arg-115; that span reads FIIIH. Residue His-238 participates in heme binding. Residue Thr-252 coordinates substrate.

The protein belongs to the tryptophan 2,3-dioxygenase family. Homotetramer. The cofactor is heme.

It catalyses the reaction L-tryptophan + O2 = N-formyl-L-kynurenine. It participates in amino-acid degradation; L-tryptophan degradation via kynurenine pathway; L-kynurenine from L-tryptophan: step 1/2. Heme-dependent dioxygenase that catalyzes the oxidative cleavage of the L-tryptophan (L-Trp) pyrrole ring and converts L-tryptophan to N-formyl-L-kynurenine. Catalyzes the oxidative cleavage of the indole moiety. In Geobacillus thermodenitrificans (strain NG80-2), this protein is Tryptophan 2,3-dioxygenase.